A 138-amino-acid chain; its full sequence is Phosphoribosyl-AMP cyclohydrolase (138 aa).

Position 84 (D84) interacts with Mg(2+). Residue C85 coordinates Zn(2+). Residues D86 and D88 each contribute to the Mg(2+) site. Zn(2+) is bound by residues C102 and C109.

This sequence belongs to the PRA-CH family. As to quaternary structure, homodimer. The cofactor is Mg(2+). Requires Zn(2+) as cofactor.

It is found in the cytoplasm. The enzyme catalyses 1-(5-phospho-beta-D-ribosyl)-5'-AMP + H2O = 1-(5-phospho-beta-D-ribosyl)-5-[(5-phospho-beta-D-ribosylamino)methylideneamino]imidazole-4-carboxamide. It participates in amino-acid biosynthesis; L-histidine biosynthesis; L-histidine from 5-phospho-alpha-D-ribose 1-diphosphate: step 3/9. Its function is as follows. Catalyzes the hydrolysis of the adenine ring of phosphoribosyl-AMP. This is Phosphoribosyl-AMP cyclohydrolase from Burkholderia cenocepacia (strain ATCC BAA-245 / DSM 16553 / LMG 16656 / NCTC 13227 / J2315 / CF5610) (Burkholderia cepacia (strain J2315)).